A 227-amino-acid polypeptide reads, in one-letter code: Cytochrome c oxidase subunit 2 (227 aa).

Residues M1–S14 are Mitochondrial intermembrane-facing. A helical membrane pass occupies residues P15–M45. Residues L46–Q59 are Mitochondrial matrix-facing. The chain crosses the membrane as a helical span at residues E60–M87. At D88 to V227 the chain is on the mitochondrial intermembrane side. The Cu cation site is built by H161, C196, E198, C200, H204, and M207. Residue E198 participates in Mg(2+) binding.

This sequence belongs to the cytochrome c oxidase subunit 2 family. As to quaternary structure, component of the cytochrome c oxidase (complex IV, CIV), a multisubunit enzyme composed of 14 subunits. The complex is composed of a catalytic core of 3 subunits MT-CO1, MT-CO2 and MT-CO3, encoded in the mitochondrial DNA, and 11 supernumerary subunits COX4I, COX5A, COX5B, COX6A, COX6B, COX6C, COX7A, COX7B, COX7C, COX8 and NDUFA4, which are encoded in the nuclear genome. The complex exists as a monomer or a dimer and forms supercomplexes (SCs) in the inner mitochondrial membrane with NADH-ubiquinone oxidoreductase (complex I, CI) and ubiquinol-cytochrome c oxidoreductase (cytochrome b-c1 complex, complex III, CIII), resulting in different assemblies (supercomplex SCI(1)III(2)IV(1) and megacomplex MCI(2)III(2)IV(2)). Found in a complex with TMEM177, COA6, COX18, COX20, SCO1 and SCO2. Interacts with TMEM177 in a COX20-dependent manner. Interacts with COX20. Interacts with COX16. The cofactor is Cu cation.

The protein localises to the mitochondrion inner membrane. It catalyses the reaction 4 Fe(II)-[cytochrome c] + O2 + 8 H(+)(in) = 4 Fe(III)-[cytochrome c] + 2 H2O + 4 H(+)(out). Component of the cytochrome c oxidase, the last enzyme in the mitochondrial electron transport chain which drives oxidative phosphorylation. The respiratory chain contains 3 multisubunit complexes succinate dehydrogenase (complex II, CII), ubiquinol-cytochrome c oxidoreductase (cytochrome b-c1 complex, complex III, CIII) and cytochrome c oxidase (complex IV, CIV), that cooperate to transfer electrons derived from NADH and succinate to molecular oxygen, creating an electrochemical gradient over the inner membrane that drives transmembrane transport and the ATP synthase. Cytochrome c oxidase is the component of the respiratory chain that catalyzes the reduction of oxygen to water. Electrons originating from reduced cytochrome c in the intermembrane space (IMS) are transferred via the dinuclear copper A center (CU(A)) of subunit 2 and heme A of subunit 1 to the active site in subunit 1, a binuclear center (BNC) formed by heme A3 and copper B (CU(B)). The BNC reduces molecular oxygen to 2 water molecules using 4 electrons from cytochrome c in the IMS and 4 protons from the mitochondrial matrix. The polypeptide is Cytochrome c oxidase subunit 2 (MT-CO2) (Uromys caudimaculatus (Giant white-tailed rat)).